An 825-amino-acid polypeptide reads, in one-letter code: MLLPLYGLASFLVLSQAALVNTSAPQASNDDPFNHSPSFYPTPQGGRINDGKWQAAFYRARELVDQMSIAEKVNLTTGVGSASGPCSGNTGSVPRLNISSICVQDGPLSVRAADLTDVFPCGMAASSSFNKQLIYDRAVAIGSEFKGKGADAILGPVYGPMGVKAAGGRGWEGHGPDPYLEGVIAYLQTIGIQSQGVVSTAKHLIGNEQEHFRFAKKDKHAGKIDPGMFNTSSSLSSEIDDRAMHEIYLWPFAEAVRGGVSSIMCSYNKLNGSHACQNSYLLNYLLKEELGFQGFVMTDWGALYSGIDAANAGLDMDMPCEAQYFGGNLTTAVLNGTLPQDRLDDMATRILSALIYSGVHNPDGPNYNAQTFLTEGHEYFKQQEGDIVVLNKHVDVRSDINRAVALRSAVEGVVLLKNEHETLPLGREKVKRISILGQAAGDDSKGTSCSLRGCGSGAIGTGYGSGAGTFSYFVTPADGIGARAQQEKISYEFIGDSWNQAAAMDSALYADAAIEVANSVAGEEIGDVDGNYGDLNNLTLWHNAVPLIKNISSINNNTIVIVTSGQQIDLEPFIDNENVTAVIYSSYLGQDFGTVLAKVLFGDENPSGKLPFTIAKDVNDYIPVIEKVDVPDPVDKFTESIYVDYRYFDKYNKPVRYEFGYGLSYSNFSLSDIEIQTLQPFSENAEPAANYSETYQYKQSNMDPSEYTVPEGFKELANYTYPYIHDASSIKANSSYDYPEGYSTEQLDGPKSLAAGGLGGNHTCGMLVTLSLLKSQIKVLMLVGLHLNCMLDIQIMMNSQHLQCNYVDLKRCFWIKIILKLFLLN.

The N-terminal stretch at 1-20 (MLLPLYGLASFLVLSQAALV) is a signal peptide. N-linked (GlcNAc...) asparagine glycans are attached at residues Asn-21, Asn-74, Asn-97, Asn-230, and Asn-271. The active site involves Asp-299. 11 N-linked (GlcNAc...) asparagine glycosylation sites follow: Asn-328, Asn-335, Asn-537, Asn-550, Asn-556, Asn-578, Asn-667, Asn-690, Asn-718, Asn-733, and Asn-761.

The protein belongs to the glycosyl hydrolase 3 family. Homotetramer.

The enzyme catalyses Hydrolysis of terminal, non-reducing beta-D-glucosyl residues with release of beta-D-glucose.. It functions in the pathway glycan metabolism; cellulose degradation. The polypeptide is Beta-glucosidase (Wickerhamomyces anomalus (Yeast)).